The chain runs to 319 residues: Putative peptide biosynthesis protein YydG (319 aa).

The 214-residue stretch at 1–214 (MYNKTVSINL…HCPGYDIVYH (214 aa)) folds into the Radical SAM core domain. Cys14, Cys18, and Cys21 together coordinate [4Fe-4S] cluster.

The cofactor is [4Fe-4S] cluster.

Functionally, required for production of the modified peptide YydF. May activate a metalloenzyme (Potential). This Bacillus subtilis (strain 168) protein is Putative peptide biosynthesis protein YydG (yydG).